We begin with the raw amino-acid sequence, 518 residues long: Bifunctional purine biosynthesis protein PurH (518 aa).

An MGS-like domain is found at 1–144 (MSKRALISVS…KNHASVTVVC (144 aa)).

This sequence belongs to the PurH family.

It catalyses the reaction (6R)-10-formyltetrahydrofolate + 5-amino-1-(5-phospho-beta-D-ribosyl)imidazole-4-carboxamide = 5-formamido-1-(5-phospho-D-ribosyl)imidazole-4-carboxamide + (6S)-5,6,7,8-tetrahydrofolate. It carries out the reaction IMP + H2O = 5-formamido-1-(5-phospho-D-ribosyl)imidazole-4-carboxamide. It functions in the pathway purine metabolism; IMP biosynthesis via de novo pathway; 5-formamido-1-(5-phospho-D-ribosyl)imidazole-4-carboxamide from 5-amino-1-(5-phospho-D-ribosyl)imidazole-4-carboxamide (10-formyl THF route): step 1/1. It participates in purine metabolism; IMP biosynthesis via de novo pathway; IMP from 5-formamido-1-(5-phospho-D-ribosyl)imidazole-4-carboxamide: step 1/1. The protein is Bifunctional purine biosynthesis protein PurH of Lactococcus lactis subsp. lactis (strain IL1403) (Streptococcus lactis).